Consider the following 291-residue polypeptide: MEKDVPLLVASAPSLMAQAKEMMEGYTLKARKGLGQHFLISQGVLNKILAAADLKPTDTVIEVGPGLGALTEELLKRAGQVIAVELDDKLIDALTEKFKGYPNFRLIHSDILKTSPEEILGQDVPYKLVANLPYYITSAVLRQFLEAKLKPESMVVMVQKEVAKNIVAKTGDMGLLTLSVRFYGNPSLVSVVPGGAFYPPPEVDSAIVKIVIPQTTIMEGVSEVDFFKLARAGFGTRRKTLLNALAQGLGISKPVILSLLNGAGIDPARRAETLSMEEWKKLCLEYAGNPC.

6 residues coordinate S-adenosyl-L-methionine: histidine 37, leucine 39, glycine 64, glutamate 85, aspartate 110, and asparagine 131.

Belongs to the class I-like SAM-binding methyltransferase superfamily. rRNA adenine N(6)-methyltransferase family. RsmA subfamily.

It localises to the cytoplasm. The enzyme catalyses adenosine(1518)/adenosine(1519) in 16S rRNA + 4 S-adenosyl-L-methionine = N(6)-dimethyladenosine(1518)/N(6)-dimethyladenosine(1519) in 16S rRNA + 4 S-adenosyl-L-homocysteine + 4 H(+). Its function is as follows. Specifically dimethylates two adjacent adenosines (A1518 and A1519) in the loop of a conserved hairpin near the 3'-end of 16S rRNA in the 30S particle. May play a critical role in biogenesis of 30S subunits. The sequence is that of Ribosomal RNA small subunit methyltransferase A from Dehalococcoides mccartyi (strain CBDB1).